A 338-amino-acid chain; its full sequence is Mitoferrin-1 (338 aa).

The interval 1-37 (MELRRGGVGSQAAGRRMDGDCRDGGCGSKDAGSEDYE) is disordered. Solcar repeat units follow at residues 43 to 131 (ASVS…MKRT), 141 to 225 (NSHL…LQEQ), and 232 to 326 (YNPQ…FKYF). Transmembrane regions (helical) follow at residues 45-64 (VSTHMTAGAMAGILEHSIMY), 106-125 (GLNVMMMGAGPAHAMYFACY), 143-162 (HLANGIAGSMATLLHDAVMN), 200-219 (SYTTQLTMNIPFQSIHFITY), 234-253 (PQSHIISGGLAGALAAAATT), and 301-320 (GIQARVIYQMPSTAISWSVY).

This sequence belongs to the mitochondrial carrier (TC 2.A.29) family. As to quaternary structure, interacts with ACB10; this interaction stabilizes SLC25A37 and enhances the function of SLC25A37 to import mitochondrial iron during erythroid differentiation.

Its subcellular location is the mitochondrion inner membrane. It carries out the reaction Fe(2+)(in) = Fe(2+)(out). Functionally, mitochondrial iron transporter that specifically mediates iron uptake in developing erythroid cells, thereby playing an essential role in heme biosynthesis. The polypeptide is Mitoferrin-1 (Slc25a37) (Rattus norvegicus (Rat)).